We begin with the raw amino-acid sequence, 557 residues long: Potassium-transporting ATPase potassium-binding subunit (557 aa).

The next 10 helical transmembrane spans lie at 1–21 (MEIL…IPIG), 62–82 (QYIF…YIIL), 132–152 (IVIT…ALAF), 176–196 (ILLP…VPQT), 253–273 (VQII…GHMI), 279–299 (AVAI…ICFS), 371–391 (IFGG…LTVF), 415–435 (LVAF…ALAL), 482–502 (VSAG…LLAV), and 528–548 (VTLI…AVAL).

It belongs to the KdpA family. In terms of assembly, the system is composed of three essential subunits: KdpA, KdpB and KdpC.

It localises to the cell membrane. In terms of biological role, part of the high-affinity ATP-driven potassium transport (or Kdp) system, which catalyzes the hydrolysis of ATP coupled with the electrogenic transport of potassium into the cytoplasm. This subunit binds the extracellular potassium ions and delivers the ions to the membrane domain of KdpB through an intramembrane tunnel. This chain is Potassium-transporting ATPase potassium-binding subunit, found in Clostridium acetobutylicum (strain ATCC 824 / DSM 792 / JCM 1419 / IAM 19013 / LMG 5710 / NBRC 13948 / NRRL B-527 / VKM B-1787 / 2291 / W).